The following is a 58-amino-acid chain: Succinate dehydrogenase subunit 8A, mitochondrial (58 aa).

In terms of assembly, component of complex II composed of eight subunits in plants: four classical SDH subunits SDH1, SDH2, SDH3 and SDH4 (a flavoprotein (FP), an iron-sulfur protein (IP), and a cytochrome b composed of a large and a small subunit.), as well as four subunits unknown in mitochondria from bacteria and heterotrophic eukaryotes.

The protein localises to the mitochondrion inner membrane. The protein operates within carbohydrate metabolism; tricarboxylic acid cycle. This is Succinate dehydrogenase subunit 8A, mitochondrial from Oryza sativa subsp. japonica (Rice).